We begin with the raw amino-acid sequence, 926 residues long: LPS-assembly protein LptD (926 aa).

The N-terminal stretch at 1-22 (MALKSPAFRKKFPLLVTGSLLA) is a signal peptide. Residues 55–91 (AAAVDLPPRPVHDTTSVSSNGTVTSQGTSSGEQSAGT) form a disordered region. A compositionally biased stretch (low complexity) spans 68–91 (TTSVSSNGTVTSQGTSSGEQSAGT).

This sequence belongs to the LptD family. Component of the lipopolysaccharide transport and assembly complex. Interacts with LptE and LptA.

The protein localises to the cell outer membrane. Functionally, together with LptE, is involved in the assembly of lipopolysaccharide (LPS) at the surface of the outer membrane. The polypeptide is LPS-assembly protein LptD (Pseudomonas syringae pv. syringae (strain B728a)).